Reading from the N-terminus, the 311-residue chain is MIKLLFMGTPQFSATVLKGLLDNPAYEILGVVTQPDRAIGRKKVIKVTPVKQLALEHGISIYQPEKLSGSQELIEIMGLGADGIITAAFGQFLPTILLDSVSFAINVHASLLPKYRGGAPIHYAIMNGDKKAGVTIMEMIKEMDAGDMVAKASTPILETDNVGTLFEKLAIIGRDLLLDSLPAYLSGELKPIPQDHSQATFSPNISPEQEKLDWTMSNQEVFNHIRGMNPWPVAHTFLEGQRLKIYEAQLAEGEGLPGQVIVKTKKSLVIATGQGALSLIVVQPAGKPKMSIIDFLNGIGRKLEVGDIIGR.

110 to 113 (SLLP) contributes to the (6S)-5,6,7,8-tetrahydrofolate binding site.

It belongs to the Fmt family.

It catalyses the reaction L-methionyl-tRNA(fMet) + (6R)-10-formyltetrahydrofolate = N-formyl-L-methionyl-tRNA(fMet) + (6S)-5,6,7,8-tetrahydrofolate + H(+). Its function is as follows. Attaches a formyl group to the free amino group of methionyl-tRNA(fMet). The formyl group appears to play a dual role in the initiator identity of N-formylmethionyl-tRNA by promoting its recognition by IF2 and preventing the misappropriation of this tRNA by the elongation apparatus. This Streptococcus pyogenes serotype M2 (strain MGAS10270) protein is Methionyl-tRNA formyltransferase.